We begin with the raw amino-acid sequence, 447 residues long: Tryptophan 5-hydroxylase 1 (447 aa).

In terms of domain architecture, ACT spans 22 to 97 (TLIFSLENEV…TVLSVDSPDQ (76 aa)). Ser-61 is subject to Phosphoserine; by PKA. Residues Tyr-238, Arg-260, and Thr-268 each coordinate L-tryptophan. His-275, His-280, and Glu-320 together coordinate Fe cation. L-tryptophan-binding residues include Ser-339 and Ile-369.

Belongs to the biopterin-dependent aromatic amino acid hydroxylase family. In terms of assembly, homotetramer. Interacts with DNAJC12. The cofactor is Fe(2+). In terms of processing, ubiquitinated, leading to its degradation by the proteasome. Ubiquitinated is triggered by phosphorylation. Phosphorylated; triggering degradation by the proteasome.

The enzyme catalyses (6R)-L-erythro-5,6,7,8-tetrahydrobiopterin + L-tryptophan + O2 = 5-hydroxy-L-tryptophan + (4aS,6R)-4a-hydroxy-L-erythro-5,6,7,8-tetrahydrobiopterin. It functions in the pathway aromatic compound metabolism; serotonin biosynthesis; serotonin from L-tryptophan: step 1/2. In terms of biological role, oxidizes L-tryptophan to 5-hydroxy-l-tryptophan in the rate-determining step of serotonin biosynthesis. The polypeptide is Tryptophan 5-hydroxylase 1 (Mus musculus (Mouse)).